Reading from the N-terminus, the 310-residue chain is Nodulation protein D 2 (310 aa).

The region spanning 6 to 63 (LDLNLLVALDALMTERKLTAAARRVKLSQPAMSAAIARLRTYFGDELFSMQGRELIPT) is the HTH lysR-type domain. Positions 23 to 42 (LTAAARRVKLSQPAMSAAIA) form a DNA-binding region, H-T-H motif.

This sequence belongs to the LysR transcriptional regulatory family.

In terms of biological role, nodD regulates the expression of the nodABCFE genes which encode other nodulation proteins. NodD is also a negative regulator of its own expression. Binds flavonoids as inducers. In Rhizobium meliloti (strain 1021) (Ensifer meliloti), this protein is Nodulation protein D 2 (nodD2).